Consider the following 281-residue polypeptide: AB hydrolase superfamily protein YclE (281 aa).

The AB hydrolase-1 domain occupies 30–268 (SAVYYPRLFS…SGHQPMLEEP (239 aa)). The active-site Nucleophile is Ser95. Asp232 is an active-site residue. The active-site Proton donor is the His261.

Belongs to the AB hydrolase superfamily.

In Bacillus subtilis (strain 168), this protein is AB hydrolase superfamily protein YclE (yclE).